The primary structure comprises 270 residues: MAAPGEALTSSGYIAHHLSNLSLAKLGLVADEASFWNVHIDSLFFSWFTGLIFLGIFYKVAKRTTAGVPGKLQCAVEMIVEFVAENVKDTFHGRNPLIAPLALTIFCWVFLMNVMDLVPIDFLPYPAEHWLGIPYLKVVPSADVNITMAMALGVFALMIYYSIKVKGLGGFAKELALHPFNHPLMIPFNLLIEVVSLLAKPLSLGMRLFGNMFAGEVVFILCAAMLPWYLQWMGSLPWAIFHILVITIQAFVFMMLTIVYLSMAHEDSDH.

5 helical membrane-spanning segments follow: residues 38–58 (VHIDSLFFSWFTGLIFLGIFY), 98–118 (IAPLALTIFCWVFLMNVMDLV), 143–163 (DVNITMAMALGVFALMIYYSI), 208–228 (LFGNMFAGEVVFILCAAMLPW), and 239–259 (AIFHILVITIQAFVFMMLTIV).

It belongs to the ATPase A chain family. In terms of assembly, F-type ATPases have 2 components, CF(1) - the catalytic core - and CF(0) - the membrane proton channel. CF(1) has five subunits: alpha(3), beta(3), gamma(1), delta(1), epsilon(1). CF(0) has three main subunits: a(1), b(2) and c(9-12). The alpha and beta chains form an alternating ring which encloses part of the gamma chain. CF(1) is attached to CF(0) by a central stalk formed by the gamma and epsilon chains, while a peripheral stalk is formed by the delta and b chains.

The protein localises to the cell inner membrane. Functionally, key component of the proton channel; it plays a direct role in the translocation of protons across the membrane. This Vibrio campbellii (strain ATCC BAA-1116) protein is ATP synthase subunit a 1.